Reading from the N-terminus, the 648-residue chain is Cysteine-rich receptor-like protein kinase 38 (648 aa).

Positions Met-1–Ala-25 are cleaved as a signal peptide. Gnk2-homologous domains are found at residues Gly-26–Thr-127 and Pro-140–Phe-247. Topologically, residues Gly-26–Gly-278 are extracellular. 5 N-linked (GlcNAc...) asparagine glycosylation sites follow: Asn-37, Asn-63, Asn-151, Asn-174, and Asn-253. A helical transmembrane segment spans residues Gly-279–Ile-299. At Arg-300–Arg-648 the chain is on the cytoplasmic side. The Protein kinase domain maps to Phe-339–Ile-611. ATP is bound by residues Ile-345–Val-353 and Lys-367. Phosphotyrosine is present on Tyr-412. Catalysis depends on Asp-464, which acts as the Proton acceptor. Position 468 is a phosphoserine (Ser-468). Thr-504 is subject to Phosphothreonine. Tyr-512 is subject to Phosphotyrosine.

Belongs to the protein kinase superfamily. Ser/Thr protein kinase family. CRK subfamily.

The protein localises to the membrane. The catalysed reaction is L-seryl-[protein] + ATP = O-phospho-L-seryl-[protein] + ADP + H(+). It catalyses the reaction L-threonyl-[protein] + ATP = O-phospho-L-threonyl-[protein] + ADP + H(+). The protein is Cysteine-rich receptor-like protein kinase 38 (CRK38) of Arabidopsis thaliana (Mouse-ear cress).